A 427-amino-acid chain; its full sequence is Terminal nucleotidyltransferase 5B (427 aa).

The segment at 1–49 (MMPSESGAESLEQPAAQVGTGAASAVATAGAAGGGPDPEASSASLGRHQ) is disordered. A compositionally biased stretch (low complexity) spans 15–30 (AAQVGTGAASAVATAG).

This sequence belongs to the TENT family.

It is found in the cytoplasm. It localises to the nucleus. The catalysed reaction is RNA(n) + ATP = RNA(n)-3'-adenine ribonucleotide + diphosphate. In terms of biological role, catalyzes the transfer of one adenosine molecule from an ATP to an mRNA poly(A) tail bearing a 3'-OH terminal group in an ATP hydrolysis-dependent manner. May be involved in maintaining the translation efficiency of at least some genes through preventing degradation of their mRNAs. Prefers RNA molecules that are adenosine-rich close to 3'-end. In addition, may inhibit cell proliferation and cell cycle progression through ubiquitination of beta-catenin/CTNNB1. This Mus musculus (Mouse) protein is Terminal nucleotidyltransferase 5B.